A 161-amino-acid polypeptide reads, in one-letter code: DNA-directed RNA polymerase 18 kDa subunit (161 aa).

This sequence belongs to the poxviridae DNA-directed RNA polymerase 18 kDa subunit family. As to quaternary structure, the DNA-dependent RNA polymerase used for intermediate and late genes expression consists of eight subunits 147 kDa, 133 kDa, 35 kDa, 30 kDa, 22 kDa, 19 kDa, 18 kDa and 7 kDa totalling more than 500 kDa in mass. The same holoenzyme, with the addition of the transcription-specificity factor RAP94, is used for early gene expression.

The protein localises to the virion. The catalysed reaction is RNA(n) + a ribonucleoside 5'-triphosphate = RNA(n+1) + diphosphate. Functionally, part of the DNA-dependent RNA polymerase which catalyzes the transcription of viral DNA into RNA using the four ribonucleoside triphosphates as substrates. Responsible for the transcription of early, intermediate and late genes. DNA-dependent RNA polymerase associates with the early transcription factor (ETF) thereby allowing the early genes transcription. Late transcription, and probably also intermediate transcription, require newly synthesized RNA polymerase. In Vertebrata (FPV), this protein is DNA-directed RNA polymerase 18 kDa subunit (RPO18).